Reading from the N-terminus, the 345-residue chain is NADH-quinone oxidoreductase subunit H (345 aa).

Helical transmembrane passes span 9-29 (ALGAFLVINAMLLSASLLVFA), 82-102 (VVMVVIAMTTASLIPFAEGVV), 108-128 (VGVIMLLALTSISVYGVTLAG), 154-174 (MGLAVISVVLIAGSLNFMEIV), 183-203 (LLGWNAVRNPIGCLIFIVTAF), 241-261 (YVNWFIASFFIVTLFFGGYLV), 282-302 (LLQFVSLMLKVSFFSFVFIWV), and 325-345 (IALANAILIALGVVLFGAVGL).

It belongs to the complex I subunit 1 family. NDH-1 is composed of 14 different subunits. Subunits NuoA, H, J, K, L, M, N constitute the membrane sector of the complex.

The protein localises to the cell inner membrane. It catalyses the reaction a quinone + NADH + 5 H(+)(in) = a quinol + NAD(+) + 4 H(+)(out). In terms of biological role, NDH-1 shuttles electrons from NADH, via FMN and iron-sulfur (Fe-S) centers, to quinones in the respiratory chain. The immediate electron acceptor for the enzyme in this species is believed to be ubiquinone. Couples the redox reaction to proton translocation (for every two electrons transferred, four hydrogen ions are translocated across the cytoplasmic membrane), and thus conserves the redox energy in a proton gradient. This subunit may bind ubiquinone. This Salinibacter ruber (strain DSM 13855 / M31) protein is NADH-quinone oxidoreductase subunit H.